Reading from the N-terminus, the 99-residue chain is Large ribosomal subunit protein uL23cz/uL23cy (99 aa).

Positions 1-37 (MGGVENPVSTDKAIRLPERKQYSSNAEPNPSKTEVKR) are disordered. A compositionally biased stretch (basic and acidic residues) spans 12–21 (KAIRLPERKQ). A compositionally biased stretch (polar residues) spans 22–32 (YSSNAEPNPSK).

The protein belongs to the universal ribosomal protein uL23 family. As to quaternary structure, part of the 50S ribosomal subunit.

The protein localises to the plastid. The protein resides in the chloroplast. Functionally, binds to 23S rRNA. The protein is Large ribosomal subunit protein uL23cz/uL23cy (rpl23-A) of Selaginella uncinata (Blue spike-moss).